Reading from the N-terminus, the 199-residue chain is Glycerol-3-phosphate acyltransferase (199 aa).

A run of 4 helical transmembrane segments spans residues 2–22 (LEVL…GILV), 77–97 (PWVL…PVFL), 113–133 (IALA…VALA), and 139–159 (LAAM…GQPL).

The protein belongs to the PlsY family. In terms of assembly, probably interacts with PlsX.

The protein resides in the cell membrane. The catalysed reaction is an acyl phosphate + sn-glycerol 3-phosphate = a 1-acyl-sn-glycero-3-phosphate + phosphate. The protein operates within lipid metabolism; phospholipid metabolism. In terms of biological role, catalyzes the transfer of an acyl group from acyl-phosphate (acyl-PO(4)) to glycerol-3-phosphate (G3P) to form lysophosphatidic acid (LPA). This enzyme utilizes acyl-phosphate as fatty acyl donor, but not acyl-CoA or acyl-ACP. This chain is Glycerol-3-phosphate acyltransferase, found in Rubrobacter xylanophilus (strain DSM 9941 / JCM 11954 / NBRC 16129 / PRD-1).